A 398-amino-acid polypeptide reads, in one-letter code: Protochlorophyllide reductase, chloroplastic (398 aa).

A chloroplast-targeting transit peptide spans 1 to 64 (MALQAASLVS…NQQIGAIRAQ (64 aa)).

It belongs to the short-chain dehydrogenases/reductases (SDR) family. POR subfamily.

The protein localises to the plastid. It is found in the chloroplast. The enzyme catalyses chlorophyllide a + NADP(+) = protochlorophyllide a + NADPH + H(+). It functions in the pathway porphyrin-containing compound metabolism; chlorophyll biosynthesis. Functionally, phototransformation of protochlorophyllide (Pchlide) to chlorophyllide (Chlide). The chain is Protochlorophyllide reductase, chloroplastic (PORA) from Cucumis sativus (Cucumber).